The following is a 1090-amino-acid chain: Exocyst complex component SEC5A (1090 aa).

Residues 18–128 form a disordered region; it reads LKEQAKRDLT…ARKEDDGAWD (111 aa). Residues 45 to 69 are compositionally biased toward low complexity; sequence QQPRQQKPVAAAAAPPKKSAAAVRK. Residues 109 to 124 are compositionally biased toward basic and acidic residues; the sequence is RGSDVREKGRARKEDD. A Phosphoserine modification is found at S180. Disordered regions lie at residues 759–783, 987–1010, and 1046–1090; these read TSRQ…NTYG, VETP…DKQS, and APLE…PRRR. The segment covering 998–1009 has biased composition (basic and acidic residues); sequence RGSEDTVSDDKQ. Residues 1058–1082 show a composition bias toward polar residues; the sequence is TYSSFRGSMDSPSRNYRGSQSSGSP.

Belongs to the SEC5 family. As to quaternary structure, the exocyst complex is composed of SEC3, SEC5, SEC6, SEC8, SEC10, EXO70A1 and EXO84B. Interacts with SEC3A and EXO70B1. Binds to EXO70H1 and EXO70B2. Binds directly to B1L.

The protein localises to the cytoplasm. Its subcellular location is the cytosol. It is found in the secreted. The protein resides in the extracellular exosome. Component of the exocyst complex involved in the docking of exocytic vesicles with fusion sites on the plasma membrane during regulated or polarized secretion. Involved in polarized cell growth and organ morphogenesis. During cytokinesis, involved in cell plate initiation, cell plate maturation and formation of new primary cell wall. Probable component of an exocyst subcomplex specifically involved in autophagy-related, Golgi-independent membrane traffic to the vacuole. Regulates autophagosome formation and autophagy-related Golgi-independent import into the vacuole. The protein is Exocyst complex component SEC5A of Arabidopsis thaliana (Mouse-ear cress).